The chain runs to 185 residues: Class I hydrophobin SC6 (185 aa).

Positions 1-17 are cleaved as a signal peptide; that stretch reads MVSRVLALISVAMLVGA. A disordered region spans residues 70–104; the sequence is HIPEVTGSSTEEATSSSTWSGASSKPTDSAPTQCN. Residues 75–93 show a composition bias toward low complexity; sequence TGSSTEEATSSSTWSGASS. The segment covering 94-104 has biased composition (polar residues); that stretch reads KPTDSAPTQCN. 4 cysteine pairs are disulfide-bonded: Cys103/Cys164, Cys110/Cys158, Cys111/Cys144, and Cys165/Cys178.

It belongs to the fungal hydrophobin family. Self-assembles to form functional amyloid fibrils called rodlets. Self-assembly into fibrillar rodlets occurs spontaneously at hydrophobic:hydrophilic interfaces and the rodlets further associate laterally to form amphipathic monolayers.

The protein localises to the secreted. It is found in the cell wall. Functionally, aerial growth, conidiation, and dispersal of filamentous fungi in the environment rely upon a capability of their secreting small amphipathic proteins called hydrophobins (HPBs) with low sequence identity. Class I can self-assemble into an outermost layer of rodlet bundles on aerial cell surfaces, conferring cellular hydrophobicity that supports fungal growth, development and dispersal; whereas Class II form highly ordered films at water-air interfaces through intermolecular interactions but contribute nothing to the rodlet structure. SC6 is a dikaryon-specific class I hydrophobin that contributes to the formation of aerial hyphae and fruiting bodies. This Schizophyllum commune (Split gill fungus) protein is Class I hydrophobin SC6.